A 127-amino-acid polypeptide reads, in one-letter code: Large ribosomal subunit protein bL12 (127 aa).

The protein belongs to the bacterial ribosomal protein bL12 family. Homodimer. Part of the ribosomal stalk of the 50S ribosomal subunit. Forms a multimeric L10(L12)X complex, where L10 forms an elongated spine to which 2 to 4 L12 dimers bind in a sequential fashion. Binds GTP-bound translation factors.

Its function is as follows. Forms part of the ribosomal stalk which helps the ribosome interact with GTP-bound translation factors. Is thus essential for accurate translation. The sequence is that of Large ribosomal subunit protein bL12 from Syntrophobacter fumaroxidans (strain DSM 10017 / MPOB).